We begin with the raw amino-acid sequence, 332 residues long: tRNA dimethylallyltransferase 2 (332 aa).

15–22 (GPTASGKT) contacts ATP. 17 to 22 (TASGKT) lines the substrate pocket. 2 interaction with substrate tRNA regions span residues 40–43 (DSVM) and 164–168 (QRIQR).

The protein belongs to the IPP transferase family. As to quaternary structure, monomer. Mg(2+) is required as a cofactor.

The catalysed reaction is adenosine(37) in tRNA + dimethylallyl diphosphate = N(6)-dimethylallyladenosine(37) in tRNA + diphosphate. Its function is as follows. Catalyzes the transfer of a dimethylallyl group onto the adenine at position 37 in tRNAs that read codons beginning with uridine, leading to the formation of N6-(dimethylallyl)adenosine (i(6)A). The polypeptide is tRNA dimethylallyltransferase 2 (Hahella chejuensis (strain KCTC 2396)).